A 362-amino-acid polypeptide reads, in one-letter code: Histidinol-phosphate aminotransferase (362 aa).

The residue at position 211 (Lys211) is an N6-(pyridoxal phosphate)lysine.

Belongs to the class-II pyridoxal-phosphate-dependent aminotransferase family. Histidinol-phosphate aminotransferase subfamily. In terms of assembly, homodimer. Requires pyridoxal 5'-phosphate as cofactor.

The enzyme catalyses L-histidinol phosphate + 2-oxoglutarate = 3-(imidazol-4-yl)-2-oxopropyl phosphate + L-glutamate. It participates in amino-acid biosynthesis; L-histidine biosynthesis; L-histidine from 5-phospho-alpha-D-ribose 1-diphosphate: step 7/9. The chain is Histidinol-phosphate aminotransferase from Serratia proteamaculans (strain 568).